Reading from the N-terminus, the 206-residue chain is Ribosomal RNA large subunit methyltransferase E (206 aa).

Residues Gly61, Trp63, Asp81, Asp97, and Asp122 each coordinate S-adenosyl-L-methionine. The active-site Proton acceptor is the Lys162.

The protein belongs to the class I-like SAM-binding methyltransferase superfamily. RNA methyltransferase RlmE family.

The protein localises to the cytoplasm. It catalyses the reaction uridine(2552) in 23S rRNA + S-adenosyl-L-methionine = 2'-O-methyluridine(2552) in 23S rRNA + S-adenosyl-L-homocysteine + H(+). Specifically methylates the uridine in position 2552 of 23S rRNA at the 2'-O position of the ribose in the fully assembled 50S ribosomal subunit. In Neisseria meningitidis serogroup C / serotype 2a (strain ATCC 700532 / DSM 15464 / FAM18), this protein is Ribosomal RNA large subunit methyltransferase E.